Consider the following 397-residue polypeptide: Elongation factor Tu (397 aa).

In terms of domain architecture, tr-type G spans 10 to 206; it reads KPHVNIGTIG…AVDASIPEPE (197 aa). Residues 19-26 are G1; the sequence is GHIDHGKT. 19-26 is a GTP binding site; the sequence is GHIDHGKT. Thr26 is a binding site for Mg(2+). Residues 62–66 are G2; sequence GITIS. The tract at residues 83–86 is G3; the sequence is DCPG. GTP-binding positions include 83-87 and 138-141; these read DCPGH and NKAD. The G4 stretch occupies residues 138–141; the sequence is NKAD. Residues 176-178 form a G5 region; it reads SAL.

This sequence belongs to the TRAFAC class translation factor GTPase superfamily. Classic translation factor GTPase family. EF-Tu/EF-1A subfamily. As to quaternary structure, monomer.

It is found in the cytoplasm. It carries out the reaction GTP + H2O = GDP + phosphate + H(+). Functionally, GTP hydrolase that promotes the GTP-dependent binding of aminoacyl-tRNA to the A-site of ribosomes during protein biosynthesis. The sequence is that of Elongation factor Tu from Parafrankia sp. (strain EAN1pec).